The chain runs to 395 residues: uncharacterized protein (395 aa).

Residues 288-318 (VAKGKEIDNAEIEKTIKEYENIEEGIEDIVK) are a coiled coil.

This is an uncharacterized protein from Ostreid herpesvirus 1 (isolate France) (OsHV-1).